The primary structure comprises 236 residues: Snake venom serine protease ussurin (236 aa).

The Peptidase S1 domain maps to 1–227 (VIGGVECNIN…YTDWIQSIIS (227 aa)). Cysteine 28 and cysteine 44 form a disulfide bridge. Active-site charge relay system residues include histidine 43 and aspartate 88. N-linked (GlcNAc...) asparagine glycans are attached at residues asparagine 99 and asparagine 100. Intrachain disulfides connect cysteine 120–cysteine 188, cysteine 152–cysteine 167, and cysteine 178–cysteine 203. Catalysis depends on serine 182, which acts as the Charge relay system.

It belongs to the peptidase S1 family. Snake venom subfamily. In terms of assembly, monomer. Expressed by the venom gland.

It is found in the secreted. Functionally, snake venom serine protease that may act in the hemostasis system of the prey. This chain is Snake venom serine protease ussurin, found in Gloydius ussuriensis (Ussuri mamushi).